A 223-amino-acid polypeptide reads, in one-letter code: MSHRIDNLPNVFNLPFKPNFACELDLQKQGFLYIAGVDEVGRGPLAGPVVTAAVILDKNRIPDGLNDSKKLSAQRRYELYHEILQSALAISIASLCARTIDQSDIRKATLEAMRRCIRGLAVPAHYALVDGRDIPFQLPCPATALIKGDQRSVSIAAASIIAKVTRDQMMECAGQVYKGYGLEKHVGYATLAHRAALEKYGPVVGLHRYSFAPLKKRYRDYMS.

The region spanning 32-223 (LYIAGVDEVG…LKKRYRDYMS (192 aa)) is the RNase H type-2 domain. 3 residues coordinate a divalent metal cation: Asp-38, Glu-39, and Asp-130.

Belongs to the RNase HII family. It depends on Mn(2+) as a cofactor. The cofactor is Mg(2+).

The protein resides in the cytoplasm. The catalysed reaction is Endonucleolytic cleavage to 5'-phosphomonoester.. In terms of biological role, endonuclease that specifically degrades the RNA of RNA-DNA hybrids. This chain is Ribonuclease HII, found in Bartonella henselae (strain ATCC 49882 / DSM 28221 / CCUG 30454 / Houston 1) (Rochalimaea henselae).